Consider the following 26-residue polypeptide: Beta-hexosaminidase (26 aa).

In terms of processing, glycosylated. As to expression, detected in dry seeds and cotyledons.

It catalyses the reaction Hydrolysis of terminal non-reducing N-acetyl-D-hexosamine residues in N-acetyl-beta-D-hexosaminides.. With respect to regulation, inhibited by AgNO(3) at a concentration of 0.1 mM. Strongly inhibited by CdCl(2), ZnCl(2) and FeCl(3) and moderately by CoCl(2), CuSO(4) and NiCl(2) at 10 mM concentration. CaCl(2), MgCl(2), MnSO(4) and KI also have a slight inhibitory effect of 20%-25% at 10 mM concentration. Activated to a small extent by MgCl(2) at 0.1 mM concentration but inhibited with increasing concentration. Not affected by carbohydrates such as fucose, galactose and glucose but displays a slight decrease in activity up to 25% with lactose, alpha-mannose and N-acetyl-galactosamine (GalNAc). Has hexosaminidase activity. Active with both p-nitrophenyl-beta-D-N-acetylglucosamine (pNP-GlcNAc) and p-nitrophenyl-beta-D-N-acetylgalactosamine (pNP-GalNAc). Not active toward p-nitrophenyl-beta-D-N,N'-diacetylchitobiose (pNP-(GlcNAc)2) or p-nitrophenyl-beta-D-N,N',N''-triacetylchitobiose (pNP-(GlcNAc)3). Removes terminal GlcNAc and may be involved in storage protein degradation. This chain is Beta-hexosaminidase, found in Lupinus albus (White lupine).